We begin with the raw amino-acid sequence, 109 residues long: Nucleoid-associated protein A1S_1684 (109 aa).

This sequence belongs to the YbaB/EbfC family. As to quaternary structure, homodimer.

Its subcellular location is the cytoplasm. The protein localises to the nucleoid. Its function is as follows. Binds to DNA and alters its conformation. May be involved in regulation of gene expression, nucleoid organization and DNA protection. The protein is Nucleoid-associated protein A1S_1684 of Acinetobacter baumannii (strain ATCC 17978 / DSM 105126 / CIP 53.77 / LMG 1025 / NCDC KC755 / 5377).